A 425-amino-acid polypeptide reads, in one-letter code: Glutamyl-tRNA reductase (425 aa).

Residues 49–52 (TCNR), serine 107, 112–114 (EPQ), and glutamine 118 contribute to the substrate site. Cysteine 50 acts as the Nucleophile in catalysis. 187–192 (GAGETI) serves as a coordination point for NADP(+).

The protein belongs to the glutamyl-tRNA reductase family. As to quaternary structure, homodimer.

It carries out the reaction (S)-4-amino-5-oxopentanoate + tRNA(Glu) + NADP(+) = L-glutamyl-tRNA(Glu) + NADPH + H(+). It functions in the pathway porphyrin-containing compound metabolism; protoporphyrin-IX biosynthesis; 5-aminolevulinate from L-glutamyl-tRNA(Glu): step 1/2. In terms of biological role, catalyzes the NADPH-dependent reduction of glutamyl-tRNA(Glu) to glutamate 1-semialdehyde (GSA). This Pseudomonas syringae pv. tomato (strain ATCC BAA-871 / DC3000) protein is Glutamyl-tRNA reductase.